Here is a 166-residue protein sequence, read N- to C-terminus: Small ribosomal subunit protein uS5 (166 aa).

The 64-residue stretch at 12 to 75 folds into the S5 DRBM domain; sequence YIEKLVQVNR…EAARRNMIQV (64 aa).

The protein belongs to the universal ribosomal protein uS5 family. Part of the 30S ribosomal subunit. Contacts proteins S4 and S8.

With S4 and S12 plays an important role in translational accuracy. In terms of biological role, located at the back of the 30S subunit body where it stabilizes the conformation of the head with respect to the body. This chain is Small ribosomal subunit protein uS5, found in Pseudomonas aeruginosa (strain LESB58).